A 1116-amino-acid polypeptide reads, in one-letter code: Cation channel sperm-associated auxiliary subunit beta (1116 aa).

Over 1-1053 (MESPLIYVSV…QIYVDEAPLP (1053 aa)) the chain is Extracellular. Cysteine 35 and cysteine 60 form a disulfide bridge. N-linked (GlcNAc...) asparagine glycans are attached at residues asparagine 90, asparagine 100, asparagine 118, asparagine 226, and asparagine 321. The cysteines at positions 189 and 302 are disulfide-linked. Cysteine 330 and cysteine 343 are oxidised to a cystine. N-linked (GlcNAc...) asparagine glycans are attached at residues asparagine 618 and asparagine 690. Intrachain disulfides connect cysteine 718–cysteine 816, cysteine 829–cysteine 1037, cysteine 911–cysteine 920, and cysteine 922–cysteine 937. N-linked (GlcNAc...) asparagine glycosylation is found at asparagine 913 and asparagine 921. N-linked (GlcNAc...) asparagine glycosylation is found at asparagine 1010 and asparagine 1015. A helical transmembrane segment spans residues 1054–1076 (FPGHTLIAVATAVVLGGLIFIAF). The Cytoplasmic portion of the chain corresponds to 1077–1116 (MFQLQGIHPWRTFQRWIRRNQEKFSSISLSELIHRSKSEE).

As to quaternary structure, component of the CatSper complex or CatSpermasome composed of the core pore-forming members CATSPER1, CATSPER2, CATSPER3 and CATSPER4 as well as auxiliary members CATSPERB, CATSPERG, CATSPERD, CATSPERE, CATSPERZ, C2CD6/CATSPERT, TMEM249, TMEM262 and EFCAB9. HSPA1 may be an additional auxiliary complex member. The core complex members CATSPER1, CATSPER2, CATSPER3 and CATSPER4 form a heterotetrameric channel. The auxiliary CATSPERB, CATSPERG, CATSPERD and CATSPERE subunits form a pavilion-like structure over the pore which stabilizes the complex through interactions with CATSPER4, CATSPER3, CATSPER1 and CATSPER2 respectively. TMEM262/CATSPERH interacts with CATSPERB, further stabilizing the complex. C2CD6/CATSPERT interacts at least with CATSPERD and is required for targeting the CatSper complex in the flagellar membrane.

It is found in the cell projection. The protein resides in the cilium. The protein localises to the flagellum membrane. Its function is as follows. Auxiliary component of the CatSper complex, a complex involved in sperm cell hyperactivation. Sperm cell hyperactivation is needed for sperm motility which is essential late in the preparation of sperm for fertilization. In Homo sapiens (Human), this protein is Cation channel sperm-associated auxiliary subunit beta.